A 705-amino-acid polypeptide reads, in one-letter code: Ribosomal RNA large subunit methyltransferase K/L (705 aa).

The THUMP domain occupies 43 to 154 (VVYRCCLWSR…GEKGILGFDL (112 aa)).

It belongs to the methyltransferase superfamily. RlmKL family.

Its subcellular location is the cytoplasm. The catalysed reaction is guanosine(2445) in 23S rRNA + S-adenosyl-L-methionine = N(2)-methylguanosine(2445) in 23S rRNA + S-adenosyl-L-homocysteine + H(+). The enzyme catalyses guanosine(2069) in 23S rRNA + S-adenosyl-L-methionine = N(2)-methylguanosine(2069) in 23S rRNA + S-adenosyl-L-homocysteine + H(+). Functionally, specifically methylates the guanine in position 2445 (m2G2445) and the guanine in position 2069 (m7G2069) of 23S rRNA. The protein is Ribosomal RNA large subunit methyltransferase K/L of Aliivibrio fischeri (strain ATCC 700601 / ES114) (Vibrio fischeri).